The following is a 228-amino-acid chain: MKPIIFCDFDGTITETDNIFSLMTEFVPQESEKIAKAMMEQTISFKDGLSAMFHLLSTEQKDEVIQYLMDTAVIREGFEDFVRYAQNHDIPFYIVSGGVDFFIEPLVEKYGPFSGIYCNKADFSGEQIKLIYSNSCDEECAKYSTQGCGCCKPSVMRKVAKEEHFKIVIGDSLSDFEAAKQADIVLARDHLIQRCEELHVSYKPFITFHDCLKIVQELMETNHAVPTT.

It belongs to the HAD-like hydrolase superfamily. MtnX family.

It catalyses the reaction 2-hydroxy-5-methylsulfanyl-3-oxopent-1-enyl phosphate + H2O = 1,2-dihydroxy-5-(methylsulfanyl)pent-1-en-3-one + phosphate. The protein operates within amino-acid biosynthesis; L-methionine biosynthesis via salvage pathway; L-methionine from S-methyl-5-thio-alpha-D-ribose 1-phosphate: step 4/6. Its function is as follows. Dephosphorylates 2-hydroxy-3-keto-5-methylthiopentenyl-1-phosphate (HK-MTPenyl-1-P) yielding 1,2-dihydroxy-3-keto-5-methylthiopentene (DHK-MTPene). This is 2-hydroxy-3-keto-5-methylthiopentenyl-1-phosphate phosphatase from Lysinibacillus sphaericus (strain C3-41).